Reading from the N-terminus, the 269-residue chain is Adenylate kinase (269 aa).

Gly-61–Thr-66 is an ATP binding site. Residues Ala-81–Val-110 form an NMP region. Residues Thr-82, Arg-87, Gly-108–Val-110, Gly-137–Arg-140, and Gln-144 each bind AMP. The LID stretch occupies residues Gly-178–Asp-215. ATP is bound by residues Arg-179 and Ser-188–Tyr-189. Arg-212 and Arg-223 together coordinate AMP. Residue Gln-251 coordinates ATP.

This sequence belongs to the adenylate kinase family. AK2 subfamily. In terms of assembly, monomer.

Its subcellular location is the cytoplasm. It localises to the cytosol. The protein resides in the mitochondrion intermembrane space. The catalysed reaction is AMP + ATP = 2 ADP. Catalyzes the reversible transfer of the terminal phosphate group between ATP and AMP. Plays an important role in cellular energy homeostasis and in adenine nucleotide metabolism. Adenylate kinase activity is critical for regulation of the phosphate utilization and the AMP de novo biosynthesis pathways. In Cryptococcus neoformans var. neoformans serotype D (strain B-3501A) (Filobasidiella neoformans), this protein is Adenylate kinase.